Here is a 589-residue protein sequence, read N- to C-terminus: MLRSHGAGVLRKSDAGQQVTLAGWVSRRRDHGGVIFIDLRDSSGITQAVFREPDVLAQAHRLRAEFCIAVSGVVEIRPEGNANAEIPTGDIEVNATSLTVLGESAPLPFQLDEPAGEELRLKYRYLDLRRDGPGSAIRLRSKVNATARAVLARHDFVEIETPTITRSTPEGARDFLVPARLRPGTFYALPQSPQLFKQLLMVAGMERYYQIAHCYRDEDFRADRQPEFTQLDMEMSFVDAEDVIAISEEILTELWMLIGYHIPAPIPRISYADAMRRFGSDKPDLRFGLELVECTEFFCDTTFRVFQAPYVGAVVMPGGAAQPRRTLDEWQDWAKQRGHRGLAYVLVTDDGTLGGPVAKNFSDAERSRLASHVGAEPGDCIFFSAGPAKSSRALLGAARGEIANRLGLIDPEAWAFVWVVDPPLFERADEATKVGEMAVGSGAWTAVHHAFTSPKPEFEDSIESDPGSVLADAYDIVCNGHEIGSGSVRINRRDIQERVFAVMGLEKAEAEEKFGFLLEAFTFGAPPHGGIAFGWDRTNALLAGMESIREVIAFPKTGGGVDPLTDAPASITAQQRKESGIDTKPKEVE.

Residue E170 coordinates L-aspartate. The tract at residues 194–197 is aspartate; that stretch reads QLFK. Residue R216 coordinates L-aspartate. Residues 216 to 218 and Q225 contribute to the ATP site; that span reads RDE. H448 is a binding site for L-aspartate. E482 serves as a coordination point for ATP. R489 provides a ligand contact to L-aspartate. Residue 534–537 coordinates ATP; that stretch reads GWDR. A disordered region spans residues 563–589; the sequence is PLTDAPASITAQQRKESGIDTKPKEVE. Residues 575–589 are compositionally biased toward basic and acidic residues; sequence QRKESGIDTKPKEVE.

The protein belongs to the class-II aminoacyl-tRNA synthetase family. Type 1 subfamily. As to quaternary structure, homodimer.

The protein localises to the cytoplasm. The catalysed reaction is tRNA(Asx) + L-aspartate + ATP = L-aspartyl-tRNA(Asx) + AMP + diphosphate. Functionally, aspartyl-tRNA synthetase with relaxed tRNA specificity since it is able to aspartylate not only its cognate tRNA(Asp) but also tRNA(Asn). Reaction proceeds in two steps: L-aspartate is first activated by ATP to form Asp-AMP and then transferred to the acceptor end of tRNA(Asp/Asn). This Mycobacterium leprae (strain Br4923) protein is Aspartate--tRNA(Asp/Asn) ligase.